Consider the following 946-residue polypeptide: Protein TMA108 (946 aa).

Residue Ser2 is modified to N-acetylserine. Substrate is bound at residue 293–297; the sequence is MAMEN. Zn(2+) is bound at residue His330. Glu331 (proton acceptor) is an active-site residue. Positions 334 and 353 each coordinate Zn(2+).

Belongs to the peptidase M1 family. In terms of assembly, associates with ribosomal complexes. It depends on Zn(2+) as a cofactor.

The protein resides in the cytoplasm. In terms of biological role, putative zinc aminopeptidase which may be involved in ribosome biogenesis. The sequence is that of Protein TMA108 (TMA108) from Saccharomyces cerevisiae (strain ATCC 204508 / S288c) (Baker's yeast).